The sequence spans 405 residues: Phosphoglycerate kinase (405 aa).

Residues 24–26 (DFN), Arg-40, 63–66 (HLGR), Arg-122, and Arg-162 each bind substrate. ATP contacts are provided by residues Lys-212, Glu-331, and 361-364 (GGDS).

It belongs to the phosphoglycerate kinase family. In terms of assembly, monomer.

The protein resides in the cytoplasm. It catalyses the reaction (2R)-3-phosphoglycerate + ATP = (2R)-3-phospho-glyceroyl phosphate + ADP. Its pathway is carbohydrate degradation; glycolysis; pyruvate from D-glyceraldehyde 3-phosphate: step 2/5. The chain is Phosphoglycerate kinase from Corynebacterium glutamicum (strain R).